The sequence spans 164 residues: MHRDSCPLDCKVYVGNLGNNGNKTELERAFGYYGPLRSVWVARNPPGFAFVEFEDPRDAADAVRELDGRTLCGCRVRVELSNGEKRSRNRGPPPSWGRRPRDDYRRRSPPPRRRSPRRRSFSRSRSRSLSRDRRRERSLSRERNHKPSRSFSRSRSRSRSNERK.

N-acetylmethionine is present on Met1. The tract at residues 1-90 (MHRDSCPLDC…SNGEKRSRNR (90 aa)) is sufficient for interaction with NXF1 and SRSP. A Phosphoserine modification is found at Ser5. An RRM domain is found at 10–83 (CKVYVGNLGN…CRVRVELSNG (74 aa)). The residue at position 23 (Lys23) is an N6-acetyllysine. The tract at residues 81-164 (SNGEKRSRNR…RSRSRSNERK (84 aa)) is disordered. Residues 107–128 (RSPPPRRRSPRRRSFSRSRSRS) show a composition bias toward basic residues. The B-1 repeat unit spans residues 119 to 133 (RSFSRSRSRSLSRDR). A 2 X approximate repeats, basic region spans residues 119 to 164 (RSFSRSRSRSLSRDRRRERSLSRERNHKPSRSFSRSRSRSRSNERK). Positions 129–142 (LSRDRRRERSLSRE) are enriched in basic and acidic residues. Residues 143 to 158 (RNHKPSRSFSRSRSRS) are compositionally biased toward basic residues. A B-2 repeat occupies 149–164 (RSFSRSRSRSRSNERK).

This sequence belongs to the splicing factor SR family. Interacts with CPSF6. Interacts with RBMY1A1. Interacts with SREK1/SFRS12. Interacts with NXF1. Interacts with YTHDC1, leading to recruitment to RNA elements adjacent to m6A sites. Interacts with SRSP; increases SRSF3 binding to specific exons. In terms of processing, phosphorylated by CLK1, CLK2, CLK3 and CLK4. Extensively phosphorylated on serine residues in the RS domain.

It localises to the nucleus. Its subcellular location is the nucleus speckle. The protein localises to the cytoplasm. In terms of biological role, splicing factor, which binds the consensus motif 5'-C[ACU][AU]C[ACU][AC]C-3' within pre-mRNA and promotes specific exons inclusion during alternative splicing. Interaction with YTHDC1, a RNA-binding protein that recognizes and binds N6-methyladenosine (m6A)-containing RNAs, promotes recruitment of SRSF3 to its mRNA-binding elements adjacent to m6A sites within exons. Also functions as an adapter involved in mRNA nuclear export. Binds mRNA which is thought to be transferred to the NXF1-NXT1 heterodimer for export (TAP/NXF1 pathway); enhances NXF1-NXT1 RNA-binding activity. Involved in nuclear export of m6A-containing mRNAs via interaction with YTHDC1: interaction with YTHDC1 facilitates m6A-containing mRNA-binding to both SRSF3 and NXF1, promoting mRNA nuclear export. This chain is Serine/arginine-rich splicing factor 3 (SRSF3), found in Bos taurus (Bovine).